A 276-amino-acid chain; its full sequence is Large ribosomal subunit protein uL2c (276 aa).

Residues 225–276 are disordered; that stretch reads AMNPVDHPHGGGEGRTPIGRKKPVTPWGYSALGKKSRKRNRYSDASILRRRE.

It belongs to the universal ribosomal protein uL2 family. In terms of assembly, part of the 50S ribosomal subunit.

The protein resides in the plastid. Its subcellular location is the chloroplast. The polypeptide is Large ribosomal subunit protein uL2c (rpl2) (Pinus koraiensis (Korean pine)).